We begin with the raw amino-acid sequence, 1476 residues long: Coiled-coil domain-containing protein 88B (1476 aa).

Residues 253-481 (SHHLALQLAN…RGLLQVLQGQ (229 aa)) adopt a coiled-coil conformation. Disordered regions lie at residues 427-451 (QRSL…SLQD), 509-706 (VAFD…EGAL), 825-866 (RRQW…ERRE), and 1323-1476 (LMRP…SLSQ). Serine 436 carries the post-translational modification Phosphoserine. Over residues 572–586 (SDWSPQESGSPVETQ) the composition is skewed to polar residues. Residue serine 596 is modified to Phosphoserine. Basic and acidic residues-rich tracts occupy residues 678–690 (EARE…EGTV), 825–834 (RRQWEREGSR), and 842–866 (AEER…ERRE). Residues 720–1303 (LASGVAEQEA…KIMDQYRVLE (584 aa)) are a coiled coil. Phosphoserine is present on residues serine 1348 and serine 1379. The span at 1448–1469 (LQEHETDANREGPEVQEPEKRP) shows a compositional bias: basic and acidic residues.

Belongs to the CCDC88 family. Homodimer. Interacts with DOCK8. Interacts (via C-terminus) with intact microtubules. Interacts with dynein-dynactin motor complex. Interacts (via C-terminus) with HSPA5. In terms of tissue distribution, expressed in endothelium (at protein level). Expressed in NK cells (at protein level).

It is found in the membrane. The protein localises to the cytoplasm. Its subcellular location is the cytoskeleton. The protein resides in the microtubule organizing center. It localises to the endoplasmic reticulum. It is found in the golgi apparatus. Its function is as follows. Acts as a positive regulator of T-cell maturation and inflammatory function. Required for several functions of T-cells, in both the CD4(+) and the CD8(+) compartments and this includes expression of cell surface markers of activation, proliferation, and cytokine production in response to specific or non-specific stimulation. Enhances NK cell cytotoxicity by positively regulating polarization of microtubule-organizing center (MTOC) to cytotoxic synapse, lytic granule transport along microtubules, and dynein-mediated clustering to MTOC. Interacts with HSPA5 and stabilizes the interaction between HSPA5 and ERN1, leading to suppression of ERN1-induced JNK activation and endoplasmic reticulum stress-induced apoptosis. The polypeptide is Coiled-coil domain-containing protein 88B (CCDC88B) (Homo sapiens (Human)).